Reading from the N-terminus, the 2153-residue chain is Genome polyprotein (2153 aa).

Gly2 carries the N-myristoyl glycine; by host lipid modification. The tract at residues 213-240 is disordered; that stretch reads HTHPGQSGHQIRGPSQSNDRSGGKPDED. Over residues 216-232 the composition is skewed to polar residues; sequence PGQSGHQIRGPSQSNDR. An amphipathic alpha-helix region spans residues 565–584; the sequence is ELQNNDDPVENFVESTLKEV. Active-site for protease 2A activity residues include His864 and Asp880. Cys897 and Cys899 together coordinate Zn(2+). Cys951 serves as the catalytic For protease 2A activity. Residues Cys957 and His959 each contribute to the Zn(2+) site. Residues 1088–1158 form a membrane-binding region; sequence SDSWLRKFTE…GFSSASSEAQ (71 aa). Residues 1088–1224 are oligomerization; that stretch reads SDSWLRKFTE…NPGCGKSLVT (137 aa). Positions 1109 to 1113 are RNA-binding; that stretch reads SIKIG. Positions 1187–1346 constitute an SF3 helicase domain; that stretch reads TKIQKDLKQL…FRNTTGLLDV (160 aa). Residue 1214–1221 coordinates ATP; that stretch reads GNPGCGKS. Zn(2+) contacts are provided by Cys1353, Cys1365, and Cys1370. The C4-type; degenerate zinc finger occupies 1353–1370; that stretch reads CTGCPKPAHYKTCCPLLC. The segment at 1397–1404 is RNA-binding; it reads ENATRKKV. Residues 1408–1413 form an oligomerization region; the sequence is LDAIFQ. The stretch at 1460 to 1480 is an intramembrane region; sequence VHYMLNCLGSLIIILGTVYAL. Residue Tyr1491 is modified to O-(5'-phospho-RNA)-tyrosine. Residues 1511 to 1689 form the Peptidase C3 domain; it reads GPEHEFVRAL…YGAALLRKYF (179 aa). Active-site for protease 3C activity residues include His1550, Glu1581, and Cys1657. One can recognise a RdRp catalytic domain in the interval 1920–2033; that stretch reads GELLAFDYTN…SYPFELDPME (114 aa). The Mg(2+) site is built by Asp1926 and Asp2019.

Belongs to the picornaviruses polyprotein family. As to quaternary structure, interacts with capsid protein VP1 and capsid protein VP3 to form heterotrimeric protomers. In terms of assembly, interacts with capsid protein VP0, and capsid protein VP3 to form heterotrimeric protomers. Five protomers subsequently associate to form pentamers which serve as building blocks for the capsid. Interacts with capsid protein VP2, capsid protein VP3 and capsid protein VP4 following cleavage of capsid protein VP0. Interacts (via C-terminus) with capsid protein VP4 (via C-terminus). Interacts with host CDHR3 (via N-terminus); this interaction occurs near each threefold vertex of the capsid and allows the virus attachment and entry into the host cell. Interacts with capsid protein VP1 and capsid protein VP3 in the mature capsid. Interacts with host CDHR3 (via N-terminus); this interaction occurs near each threefold vertex of the capsid and allows the virus attachment and entry into the host cell. As to quaternary structure, interacts with capsid protein VP0 and capsid protein VP1 to form heterotrimeric protomers. Five protomers subsequently associate to form pentamers which serve as building blocks for the capsid. Interacts with capsid protein VP4 in the mature capsid. Interacts with protein 2C; this interaction may be important for virion morphogenesis. Interacts with host CDHR3 (via N-terminus); this interaction occurs near each threefold vertex of the capsid and allows the virus attachment and entry into the host cell. In terms of assembly, interacts (via C-terminus) with capsid protein VP1 (via C-terminus). Interacts with capsid protein VP3. Homodimer. As to quaternary structure, homohexamer; forms a hexameric ring structure with 6-fold symmetry characteristic of AAA+ ATPases. Interacts (via N-terminus) with host RTN3 (via reticulon domain); this interaction is important for viral replication. Interacts with capsid protein VP3; this interaction may be important for virion morphogenesis. In terms of assembly, interacts with protein 3CD. Homodimer. Interacts with host GBF1. Interacts (via GOLD domain) with host ACBD3 (via GOLD domain); this interaction allows the formation of a viral protein 3A/ACBD3 heterotetramer with a 2:2 stoichiometry, which will stimulate the recruitment of host PI4KB in order to synthesize PI4P at the viral RNA replication sites. As to quaternary structure, interacts with RNA-directed RNA polymerase. In terms of assembly, interacts with protein 3AB and with RNA-directed RNA polymerase. Interacts with Viral protein genome-linked and with protein 3CD. Requires Mg(2+) as cofactor. Specific enzymatic cleavages in vivo by the viral proteases yield processing intermediates and the mature proteins. Post-translationally, myristoylation is required for the formation of pentamers during virus assembly. Further assembly of 12 pentamers and a molecule of genomic RNA generates the provirion. In terms of processing, during virion maturation, immature virions are rendered infectious following cleavage of VP0 into VP4 and VP2. This maturation seems to be an autocatalytic event triggered by the presence of RNA in the capsid and it is followed by a conformational change infectious virion. Myristoylation is required during RNA encapsidation and formation of the mature virus particle. Post-translationally, VPg is uridylylated by the polymerase into VPg-pUpU. This acts as a nucleotide-peptide primer for the genomic RNA replication.

The protein localises to the virion. The protein resides in the host cytoplasm. It is found in the host cytoplasmic vesicle membrane. Its subcellular location is the host nucleus. The enzyme catalyses a ribonucleoside 5'-triphosphate + H2O = a ribonucleoside 5'-diphosphate + phosphate + H(+). It carries out the reaction Selective cleavage of Gln-|-Gly bond in the poliovirus polyprotein. In other picornavirus reactions Glu may be substituted for Gln, and Ser or Thr for Gly.. It catalyses the reaction Selective cleavage of Tyr-|-Gly bond in the picornavirus polyprotein.. The catalysed reaction is RNA(n) + a ribonucleoside 5'-triphosphate = RNA(n+1) + diphosphate. Its activity is regulated as follows. Replication or transcription is subject to high level of random mutations by the nucleotide analog ribavirin. Its function is as follows. Forms an icosahedral capsid of pseudo T=3 symmetry with capsid proteins VP2 and VP3. The capsid is 300 Angstroms in diameter, composed of 60 copies of each capsid protein and enclosing the viral positive strand RNA genome. Capsid protein VP1 mainly forms the vertices of the capsid. The VP1 C-termini form 60 dominant spike-like protrusions on the surface of the virion. Capsid protein VP1 interacts with host cell receptor CDHR3 to provide virion attachment to target host cells. This attachment induces virion internalization. Tyrosine kinases are probably involved in the entry process. After binding to its receptor, the capsid undergoes conformational changes. Capsid protein VP1 N-terminus (that contains an amphipathic alpha-helix) and capsid protein VP4 are externalized. Together, they shape a pore in the host membrane through which viral genome is translocated to host cell cytoplasm. In terms of biological role, forms an icosahedral capsid of pseudo T=3 symmetry with capsid proteins VP2 and VP3. The capsid is 300 Angstroms in diameter, composed of 60 copies of each capsid protein and enclosing the viral positive strand RNA genome. Lies on the inner surface of the capsid shell. After binding to the host receptor, the capsid undergoes conformational changes. Capsid protein VP4 is released, Capsid protein VP1 N-terminus is externalized, and together, they shape a pore in the host membrane through which the viral genome is translocated into the host cell cytoplasm. Functionally, component of immature procapsids, which is cleaved into capsid proteins VP4 and VP2 after maturation. Allows the capsid to remain inactive before the maturation step. Its function is as follows. Cysteine protease that cleaves viral polyprotein and specific host proteins. It is responsible for the autocatalytic cleavage between the P1 and P2 regions, which is the first cleavage occurring in the polyprotein. Also cleaves the host translation initiation factor EIF4G1, in order to shut down the capped cellular mRNA translation. Inhibits the host nucleus-cytoplasm protein and RNA trafficking by cleaving host members of the nuclear pores. Counteracts stress granule formation probably by antagonizing its assembly or promoting its dissassembly. In terms of biological role, plays an essential role in the virus replication cycle by acting as a viroporin. Creates a pore in the host endoplasmic reticulum and as a consequence releases Ca2+ in the cytoplasm of infected cell. In turn, high levels of cytoplasmic calcium may trigger membrane trafficking and transport of viral ER-associated proteins to viroplasms, sites of viral genome replication. Induces and associates with structural rearrangements of intracellular membranes. Displays RNA-binding, nucleotide binding and NTPase activities. May play a role in virion morphogenesis and viral RNA encapsidation by interacting with the capsid protein VP3. Functionally, localizes the viral replication complex to the surface of membranous vesicles. Together with protein 3CD binds the Cis-Active RNA Element (CRE) which is involved in RNA synthesis initiation. Acts as a cofactor to stimulate the activity of 3D polymerase, maybe through a nucleid acid chaperone activity. Its function is as follows. Localizes the viral replication complex to the surface of membranous vesicles. It inhibits host cell endoplasmic reticulum-to-Golgi apparatus transport and causes the disassembly of the Golgi complex, possibly through GBF1 interaction. This would result in depletion of MHC, trail receptors and IFN receptors at the host cell surface. Plays an essential role in viral RNA replication by recruiting ACBD3 and PI4KB at the viral replication sites, thereby allowing the formation of the rearranged membranous structures where viral replication takes place. In terms of biological role, acts as a primer for viral RNA replication and remains covalently bound to viral genomic RNA. VPg is uridylylated prior to priming replication into VPg-pUpU. The oriI viral genomic sequence may act as a template for this. The VPg-pUpU is then used as primer on the genomic RNA poly(A) by the RNA-dependent RNA polymerase to replicate the viral genome. During genome replication, the VPg-RNA linkage is removed by the host TDP2, thereby accelerating replication. During the late stage of the replication cycle, host TDP2 is excluded from sites of viral RNA synthesis and encapsidation, allowing for the generation of progeny virions. Involved in the viral replication complex and viral polypeptide maturation. It exhibits protease activity with a specificity and catalytic efficiency that is different from protease 3C. Protein 3CD lacks polymerase activity. Protein 3CD binds to the 5'UTR of the viral genome. Functionally, major viral protease that mediates proteolytic processing of the polyprotein. Cleaves host EIF5B, contributing to host translation shutoff. Also cleaves host PABPC1, contributing to host translation shutoff. Its function is as follows. Replicates the viral genomic RNA on the surface of intracellular membranes. May form linear arrays of subunits that propagate along a strong head-to-tail interaction called interface-I. Covalently attaches UMP to a tyrosine of VPg, which is used to prime RNA synthesis. The positive stranded RNA genome is first replicated at virus induced membranous vesicles, creating a dsRNA genomic replication form. This dsRNA is then used as template to synthesize positive stranded RNA genomes. ss(+)RNA genomes are either translated, replicated or encapsidated. In Homo sapiens (Human), this protein is Genome polyprotein.